The primary structure comprises 306 residues: 4-hydroxy-tetrahydrodipicolinate synthase (306 aa).

Position 49 (T49) interacts with pyruvate. Catalysis depends on Y136, which acts as the Proton donor/acceptor. K164 serves as the catalytic Schiff-base intermediate with substrate. Pyruvate is bound at residue I207.

It belongs to the DapA family. In terms of assembly, homotetramer; dimer of dimers.

Its subcellular location is the cytoplasm. The catalysed reaction is L-aspartate 4-semialdehyde + pyruvate = (2S,4S)-4-hydroxy-2,3,4,5-tetrahydrodipicolinate + H2O + H(+). It functions in the pathway amino-acid biosynthesis; L-lysine biosynthesis via DAP pathway; (S)-tetrahydrodipicolinate from L-aspartate: step 3/4. Functionally, catalyzes the condensation of (S)-aspartate-beta-semialdehyde [(S)-ASA] and pyruvate to 4-hydroxy-tetrahydrodipicolinate (HTPA). This chain is 4-hydroxy-tetrahydrodipicolinate synthase, found in Haloarcula marismortui (strain ATCC 43049 / DSM 3752 / JCM 8966 / VKM B-1809) (Halobacterium marismortui).